The chain runs to 264 residues: uncharacterized protein (264 aa).

6 residues coordinate a divalent metal cation: His-5, His-7, Glu-93, His-134, His-158, and Asp-208.

Belongs to the metallo-dependent hydrolases superfamily. TatD-type hydrolase family. Requires a divalent metal cation as cofactor.

This is an uncharacterized protein from Mycobacterium tuberculosis (strain ATCC 25618 / H37Rv).